The chain runs to 536 residues: CTP synthase (536 aa).

The segment at 1–267 (MTKFIFVTGG…DDIVIKRLQL (267 aa)) is amidoligase domain. Ser13 lines the CTP pocket. UTP is bound at residue Ser13. 14 to 19 (SLGKGI) is a binding site for ATP. Tyr54 lines the L-glutamine pocket. Asp71 contacts ATP. 2 residues coordinate Mg(2+): Asp71 and Glu141. CTP is bound by residues 148–150 (DIE), 188–193 (KTKPTQ), and Lys224. Residues 188 to 193 (KTKPTQ) and Lys224 each bind UTP. 240 to 242 (RDA) provides a ligand contact to ATP. The region spanning 293-535 (TIGLVGKYVS…IEASLKYQQN (243 aa)) is the Glutamine amidotransferase type-1 domain. Gly355 is an L-glutamine binding site. Residue Cys382 is the Nucleophile; for glutamine hydrolysis of the active site. Residues 383–386 (LGMQ), Glu406, and Arg463 contribute to the L-glutamine site. Residues His508 and Glu510 contribute to the active site.

It belongs to the CTP synthase family. Homotetramer.

It catalyses the reaction UTP + L-glutamine + ATP + H2O = CTP + L-glutamate + ADP + phosphate + 2 H(+). The catalysed reaction is L-glutamine + H2O = L-glutamate + NH4(+). It carries out the reaction UTP + NH4(+) + ATP = CTP + ADP + phosphate + 2 H(+). It functions in the pathway pyrimidine metabolism; CTP biosynthesis via de novo pathway; CTP from UDP: step 2/2. Its activity is regulated as follows. Allosterically activated by GTP, when glutamine is the substrate; GTP has no effect on the reaction when ammonia is the substrate. The allosteric effector GTP functions by stabilizing the protein conformation that binds the tetrahedral intermediate(s) formed during glutamine hydrolysis. Inhibited by the product CTP, via allosteric rather than competitive inhibition. Its function is as follows. Catalyzes the ATP-dependent amination of UTP to CTP with either L-glutamine or ammonia as the source of nitrogen. Regulates intracellular CTP levels through interactions with the four ribonucleotide triphosphates. The sequence is that of CTP synthase from Staphylococcus aureus (strain COL).